The following is a 2241-amino-acid chain: Large tegument protein deneddylase (2241 aa).

A deubiquitination activity region spans residues 1–238 (MKVTQASCHQ…IDLTGVVRES (238 aa)). One can recognise a Peptidase C76 domain in the interval 4 to 226 (TQASCHQGDI…AARLVSTYRD (223 aa)). Active-site residues include Cys24, Asp160, and His162. The disordered stretch occupies residues 239 to 314 (ADTAATTTTA…STTSKTLATA (76 aa)). Low complexity predominate over residues 240–250 (DTAATTTTAAP). Positions 251–268 (SLPPLPDPIVDPGCPPGV) are enriched in pro residues. The span at 304–314 (PSTTSKTLATA) shows a compositional bias: low complexity. An interaction with inner tegument protein region spans residues 327-331 (SSAVP). The tract at residues 1170–1229 (RSSQQKMEEQLQETRQQMTETSERLDRSLRQDPGSSSVTRVPEKPFKGQELAGRITPPPA) is disordered. The segment covering 1190–1199 (TSERLDRSLR) has biased composition (basic and acidic residues).

This sequence belongs to the herpesviridae large tegument protein family. As to quaternary structure, interacts with host CUL1 and CUL4A; these interactions inhibit the E3 ligase activity of cullins. Interacts with inner tegument protein. Interacts with capsid vertex specific component CVC2. Interacts with the major capsid protein/MCP.

The protein resides in the virion tegument. It is found in the host cytoplasm. It localises to the host nucleus. The enzyme catalyses Thiol-dependent hydrolysis of ester, thioester, amide, peptide and isopeptide bonds formed by the C-terminal Gly of ubiquitin (a 76-residue protein attached to proteins as an intracellular targeting signal).. Its function is as follows. Large tegument protein that plays multiple roles in the viral cycle. During viral entry, remains associated with the capsid while most of the tegument is detached and participates in the capsid transport toward the host nucleus. Plays a role in the routing of the capsid at the nuclear pore complex and subsequent uncoating. Within the host nucleus, acts as a deneddylase and promotes the degradation of nuclear CRLs (cullin-RING ubiquitin ligases) and thereby stabilizes nuclear CRL substrates, while cytoplasmic CRLs remain unaffected. These modifications prevent host cell cycle S-phase progression and create a favorable environment allowing efficient viral genome replication. Participates later in the secondary envelopment of capsids. Indeed, plays a linker role for the association of the outer viral tegument to the capsids together with the inner tegument protein. The polypeptide is Large tegument protein deneddylase (UL48) (Human cytomegalovirus (strain AD169) (HHV-5)).